Reading from the N-terminus, the 41-residue chain is uncharacterized protein (41 aa).

This is an uncharacterized protein from Rickettsia prowazekii (strain Madrid E).